Reading from the N-terminus, the 673-residue chain is UvrABC system protein B (673 aa).

One can recognise a Helicase ATP-binding domain in the interval 26–414 (ANFEAGLAKQ…AGEITELVVR (389 aa)). 39-46 (GVTGSGKT) provides a ligand contact to ATP. The Beta-hairpin motif lies at 92 to 115 (YYDYYQPEAYVPSSDTFIEKDSSI). A Helicase C-terminal domain is found at 431 to 597 (QVDDLMSEVH…SVARPISDIM (167 aa)). Residues 601-626 (REDAAEKKAGKGRSKSRQVAEEPADY) form a disordered region. The 36-residue stretch at 635 to 670 (AGKLKALEQKMYQHAKDLEFEAAAQIRDQILKLKAA) folds into the UVR domain.

It belongs to the UvrB family. In terms of assembly, forms a heterotetramer with UvrA during the search for lesions. Interacts with UvrC in an incision complex.

It localises to the cytoplasm. The UvrABC repair system catalyzes the recognition and processing of DNA lesions. A damage recognition complex composed of 2 UvrA and 2 UvrB subunits scans DNA for abnormalities. Upon binding of the UvrA(2)B(2) complex to a putative damaged site, the DNA wraps around one UvrB monomer. DNA wrap is dependent on ATP binding by UvrB and probably causes local melting of the DNA helix, facilitating insertion of UvrB beta-hairpin between the DNA strands. Then UvrB probes one DNA strand for the presence of a lesion. If a lesion is found the UvrA subunits dissociate and the UvrB-DNA preincision complex is formed. This complex is subsequently bound by UvrC and the second UvrB is released. If no lesion is found, the DNA wraps around the other UvrB subunit that will check the other stand for damage. This is UvrABC system protein B from Xanthomonas campestris pv. campestris (strain 8004).